Here is a 534-residue protein sequence, read N- to C-terminus: N-acetylglutamate synthase, mitochondrial (534 aa).

Residues 1 to 18 (MATALMAVVLRAAAVAPR) constitute a mitochondrion transit peptide. The tract at residues 19 to 99 (LRGRGGTGGA…HESPEPPSGR (81 aa)) is disordered. Residues 19-376 (LRGRGGTGGA…SGTLFKNAER (358 aa)) are amino-acid kinase domain (AAK). Over residues 81–96 (VPSPRPPVPHESPEPP) the composition is skewed to pro residues. The N-acetyltransferase domain maps to 375 to 526 (ERMLRVRSLD…HAKGLPDSFH (152 aa)). Substrate contacts are provided by residues Lys401, Lys444, and 474-479 (RSRVTN).

Belongs to the acetyltransferase family. As to quaternary structure, homodimer. Homotetramer. Post-translationally, probably processed by mitochondrial processing peptidase (MPP). The long form has not yet been isolated. As to expression, highly expressed in the adult liver, kidney and small intestine. Weakly expressed in the fetal liver, lung, pancreas, placenta, heart and brain tissue.

The protein localises to the mitochondrion matrix. It catalyses the reaction L-glutamate + acetyl-CoA = N-acetyl-L-glutamate + CoA + H(+). The protein operates within amino-acid biosynthesis; L-arginine biosynthesis; N(2)-acetyl-L-ornithine from L-glutamate: step 1/4. With respect to regulation, increased by L-arginine. Functionally, plays a role in the regulation of ureagenesis by producing the essential cofactor N-acetylglutamate (NAG), thus modulating carbamoylphosphate synthase I (CPS1) activity. The chain is N-acetylglutamate synthase, mitochondrial (NAGS) from Homo sapiens (Human).